A 292-amino-acid polypeptide reads, in one-letter code: Putative two-component response regulator-like APRR4 (292 aa).

In terms of domain architecture, Response regulatory spans 43–158; it reads RVLVFDEDPS…DLRIVFKHLV (116 aa). A disordered region spans residues 168–215; that stretch reads VTGEAEKAAGEKSSSVGDSTIRNPNKSKRSSCLEAEVNEEDRHDHNDR. Residues 179-191 are compositionally biased toward polar residues; the sequence is KSSSVGDSTIRNP. Residues 225–275 constitute a DNA-binding region (myb-like GARP); it reads RVVWDEELHQNFLNAVDFLGLERAVPKKILDVMKVDYISRENVASHLQVTF.

The protein belongs to the ARR-like family. As to quaternary structure, binds the target DNA as a monomer.

The protein localises to the nucleus. Its function is as follows. Transcriptional activator that binds specifically to the DNA sequence 5'-[AG]GATT-3'. The sequence is that of Putative two-component response regulator-like APRR4 (APRR4) from Arabidopsis thaliana (Mouse-ear cress).